Here is a 720-residue protein sequence, read N- to C-terminus: MNTILMIPTGEGVGLTSACLGLIYALDCNGIKAGFLKPFSQELPNQVDRTTSLFSHLFQGKTVTSISHEKVLQRLALGERDELLEEAVSIHRNVAANYDVIIVEGLLPNAQDHFATELNAALAQALDAKVVLVSTADVQNPRRTAEKIEAHLHHFGGVSSNRTAGVLFMRTRGLPEETAQIPLTIDPSLRLNTEIAAFSQELQRYNRNLGTTTLPIIGLVPFSNTLSVPRTLDIASIIEGDWIHQGEARHRRILHSSLIASSIEYELNKFVAGELIISASERTDVLLASSLATSNGIPLAGLVLTERKAPNPQILDFCQHAIKQGLPILHTQLNTLETAQRLADFGNEIPVDDTERAEQVTRFVSSHIDTAWLNSQINTGVQPRLSPSAFRHELVQKSIAAKKRIVLPEGDEPRTVQAAAICQSRGIAHCILLAKPEAVVEVAKARGIELPDDLEIIDPDLIRNQYITPMVELRNGKLNELQAKEQLQDTVVLGTMMLALDQVDGLVSGAIHTTANTVRPAFQLIKTAPDYSLVSSVFFMLLPDEVYVYGDCAINPDPDADQLAEIAIQSADSAKAFGINPRIAMISYSTGTSGAGADVEKVAKATEIAKQRRPDLLIDGPLQYDAASVESVGRQKAPDSQVAGRANVFIFPDLNTGNTTYKAVQRSANVVSVGPMLQGLNKPVNDLSRGALVDDIVFTIALTAIQAEQQLEAKAAALAS.

The tract at residues 389–720 (AFRHELVQKS…LEAKAAALAS (332 aa)) is phosphate acetyltransferase.

In the N-terminal section; belongs to the CobB/CobQ family. The protein in the C-terminal section; belongs to the phosphate acetyltransferase and butyryltransferase family. Homohexamer.

It is found in the cytoplasm. The catalysed reaction is acetyl-CoA + phosphate = acetyl phosphate + CoA. The protein operates within metabolic intermediate biosynthesis; acetyl-CoA biosynthesis; acetyl-CoA from acetate: step 2/2. Its function is as follows. Involved in acetate metabolism. This chain is Phosphate acetyltransferase (pta), found in Acinetobacter baylyi (strain ATCC 33305 / BD413 / ADP1).